Reading from the N-terminus, the 425-residue chain is tRNA(Ile)-lysidine synthase (425 aa).

27–32 contributes to the ATP binding site; sequence SGGLDS.

The protein belongs to the tRNA(Ile)-lysidine synthase family.

The protein localises to the cytoplasm. The enzyme catalyses cytidine(34) in tRNA(Ile2) + L-lysine + ATP = lysidine(34) in tRNA(Ile2) + AMP + diphosphate + H(+). Its function is as follows. Ligates lysine onto the cytidine present at position 34 of the AUA codon-specific tRNA(Ile) that contains the anticodon CAU, in an ATP-dependent manner. Cytidine is converted to lysidine, thus changing the amino acid specificity of the tRNA from methionine to isoleucine. This chain is tRNA(Ile)-lysidine synthase, found in Streptococcus pneumoniae (strain 70585).